Reading from the N-terminus, the 390-residue chain is Fer-related kinase 1 (390 aa).

The 97-residue stretch at 23 to 119 (YYHGMVPRQD…ASGAKIRRPM (97 aa)) folds into the SH2 domain. The 256-residue stretch at 131 to 386 (IVANKKLGEG…SIHKKLREFY (256 aa)) folds into the Protein kinase domain. ATP contacts are provided by residues 137–145 (LGEGAFGDV) and Lys161. Asp252 acts as the Proton acceptor in catalysis.

The protein belongs to the protein kinase superfamily. Tyr protein kinase family. Fes/fps subfamily. Interacts with hmp-2. The cofactor is Mn(2+).

The protein resides in the nucleus. It is found in the cytoplasm. Its subcellular location is the cell junction. The protein localises to the cell membrane. It catalyses the reaction L-tyrosyl-[protein] + ATP = O-phospho-L-tyrosyl-[protein] + ADP + H(+). Its function is as follows. Non-receptor tyrosine-protein kinase which plays a role in morphogenesis by regulating the epidermal enclosure of the embryo, independently of its kinase activity. Prevents hyperactivation of the Wnt signaling pathway during endoderm development, probably by preventing hmp-2 nuclear translocation. The chain is Fer-related kinase 1 from Caenorhabditis elegans.